Consider the following 602-residue polypeptide: FAD-binding monooxygenase hmp7 (602 aa).

FAD-binding positions include 108 to 111 (TWYW), 120 to 121 (DV), and tyrosine 126. An NADP(+)-binding site is contributed by 118-120 (QCD). NADP(+)-binding positions include 252–258 (TGATAVQ) and 275–276 (RT).

The protein belongs to the FAD-binding monooxygenase family. Requires FAD as cofactor.

Its pathway is secondary metabolite biosynthesis. FAD-binding monooxygenase; part of the gene cluster that mediates the biosynthesis of hypothemycin, a resorcylic acid lactone (RAL) that irreversibly inhibits a subset of protein kinases with a conserved cysteine in the ATP binding site such as human ERK2. The first step is performed by both PKSs hmp3 and hmp8 and leads to the production of 7',8'-dehydrozearalenol (DHZ). The highly reducing PKS hpm8 synthesizes the reduced hexaketide (7S,11S,2E,8E)-7,11-dihydroxy-dodeca-2,8-dienoate, which is transferred downstream to the non-reducing PKS hpm3. Hpm3 then extends the reduced hexaketide to a nonaketide, after which regioselective cyclization and macrolactonization affords DHZ. The next step is the conversion of DHZ into aigialomycin C and is performed by the O-methyltransferase hmp5, the FAD-binding monooxygenase hmp7, and the cytochrome P450 monooxygenase hmp1. The wide substrate tolerance of the hmp5 and hmp7 implies that the reactions from DHZ to aigialomycin C can occur in any order. The steps from aigialomycin C to hypothemycin are less well established. The FAD-linked oxidoreductase hmp9 presumably catalyzes oxidation of the C-6' hydroxyl to a ketone. The timing of this oxidation is important, since the resulting enone functional group is a Michael acceptor that can react spontaneously with glutathione, an abundant metabolite in fungal cells. The glutathione S-transferase hmp2 catalyzes cis-trans isomerization of the 7',8' double bond with equilibrium favoring the trans isomer. The hpm6-encoded transporter might preferentially pump hypothemycin out of the cell relative to the trans isomer aigialomycin A. The cis-to-trans isomerization may be coupled with C-4' hydroxylation, since all known hypothemycin analogs containing the enone functional group also have hydroxyl groups at both C-4' and C-5'. This chain is FAD-binding monooxygenase hmp7, found in Hypomyces subiculosus (Nectria subiculosa).